The following is a 525-amino-acid chain: MNFILTDFAARLELVARNPEVFKQFGRGVERETLRYSQNGRIATSMHPQGLGSAFTNQWITTDFAESLLEFITPVSHDIDVLLGQLDDIHHFTQTQLGEEKMWPMSMPCYVETEDQITLAQYGSSNSAKMKTLYREGLKRRYGSLMQIISGVHFNFSFPESFWDALHGEQTAEERQATKSEAYFGLIRNYYRFGWLIPYFFGASPAMCSSFLQGRETSLPFEALGKTLYLPKATSLRLSDLGYTNSAQSVLTIGFNSIDEYLEGLSKAIRTPSAEFAKLGVKENGEYRQLNSNVLQIENELYAPIRPKRVAKNGEKPSEALARGGVEYIEVRSLDVNPFTPVGITETQVRFLDLFLTWAALSESQPMDQCELACWRENWNKVVVSGREYGLELQIGCKGEKLSLQAWAHRVFAELRQLAEVMDSAHGDNQYSLACSELEQWIDHPEKTLSAQLLTLIQQNGSLGATGCELGRAYREQNLAHHYRHFSLQQMEQEVALSLIKQSQIEQADEVDFDTYLADYFAYLK.

It belongs to the glutamate--cysteine ligase type 1 family. Type 1 subfamily.

It catalyses the reaction L-cysteine + L-glutamate + ATP = gamma-L-glutamyl-L-cysteine + ADP + phosphate + H(+). It functions in the pathway sulfur metabolism; glutathione biosynthesis; glutathione from L-cysteine and L-glutamate: step 1/2. In Vibrio vulnificus (strain YJ016), this protein is Glutamate--cysteine ligase.